We begin with the raw amino-acid sequence, 577 residues long: MAQRIFTLIFLLWTAVGTPQVAASSFGQKLFGNSTTSRFLPVDGAFAFEFQQQGNQLNLRWDIHPDYYLYRAQIKIEGNGATLGKVELPQGESHNDEFFGQVFILRDRLALAVPIEQAESGATVKVTYQGCADAGFCYPPETRTVPLSQVLATANTDSPINTLSGQTAPPQTTPMPFSPWWALLIGIGVAFTPCVLPMYPLIASLVLGRKEQLTPRRTLLLSMTYVQGMALTYTLLGLIVAAAGLRFQAALQHPYILIGLSVMFIALALSMFGLYTLQLPSSVQTRLTEWSNRQQGGSVTGVFCMGALAGLICSPCTTAPLSAILLYIAQSGNMLAGGGTLYLYALGMGLPLILVTLFGNKLLPRSGPWMQYVKEAFGFIILALPVFLLERILGEAWGIRLWSALGIAFFGWALMLTLSSKKGWMRGVQLLLLAGVVISAKPLQDWVFPPTGTAQTHTSALNFAPVANIADLNSALAKSPQPVMLDLYADWCVACKEFEKYTFSDPAVQNHLSRITLLQADVTANREEQNALLKKLQVLGLPTIVFFDTQGKEIPGSRVTGFMNAEQFQAHLQKFSP.

A signal peptide spans 1-23 (MAQRIFTLIFLLWTAVGTPQVAA). 2 cysteine pairs are disulfide-bonded: Cys131-Cys137 and Cys194-Cys316. Helical transmembrane passes span 182 to 202 (ALLI…YPLI), 225 to 245 (YVQG…AAGL), 255 to 275 (YILI…FGLY), 308 to 328 (LAGL…LLYI), 338 to 358 (GGTL…VTLF), 369 to 389 (WMQY…VFLL), and 396 to 416 (AWGI…ALML). Residues 437–577 (VISAKPLQDW…FQAHLQKFSP (141 aa)) enclose the Thioredoxin domain. Cysteines 492 and 495 form a disulfide.

It belongs to the thioredoxin family. DsbD subfamily.

It is found in the cell inner membrane. It catalyses the reaction [protein]-dithiol + NAD(+) = [protein]-disulfide + NADH + H(+). The catalysed reaction is [protein]-dithiol + NADP(+) = [protein]-disulfide + NADPH + H(+). Functionally, required to facilitate the formation of correct disulfide bonds in some periplasmic proteins and for the assembly of the periplasmic c-type cytochromes. Acts by transferring electrons from cytoplasmic thioredoxin to the periplasm. This transfer involves a cascade of disulfide bond formation and reduction steps. The sequence is that of Thiol:disulfide interchange protein DsbD from Pectobacterium atrosepticum (strain SCRI 1043 / ATCC BAA-672) (Erwinia carotovora subsp. atroseptica).